Here is a 953-residue protein sequence, read N- to C-terminus: Protein translocase subunit SecA (953 aa).

ATP is bound by residues Gln84, 102–106 (GEGKT), and Asp491. The segment at 832 to 953 (EPEPAPEQPS…RAEAKKNKRR (122 aa)) is disordered. The span at 841 to 865 (SVPVSVSRSAEPTPDLQAAAEAAAA) shows a compositional bias: low complexity. Over residues 898–907 (KGLDAPEKQR) the composition is skewed to basic and acidic residues. Positions 908–934 (LNYSGPTEQGGVQTTSESAGEQGNGTS) are enriched in polar residues. Residues 940–953 (RAAARAEAKKNKRR) show a composition bias toward basic and acidic residues.

Belongs to the SecA family. Monomer and homodimer. Part of the essential Sec protein translocation apparatus which comprises SecA, SecYEG and auxiliary proteins SecDF. Other proteins may also be involved.

The protein localises to the cell membrane. It localises to the cytoplasm. The catalysed reaction is ATP + H2O + cellular proteinSide 1 = ADP + phosphate + cellular proteinSide 2.. Functionally, part of the Sec protein translocase complex. Interacts with the SecYEG preprotein conducting channel. Has a central role in coupling the hydrolysis of ATP to the transfer of proteins into and across the cell membrane, serving as an ATP-driven molecular motor driving the stepwise translocation of polypeptide chains across the membrane. The polypeptide is Protein translocase subunit SecA (Saccharopolyspora erythraea (strain ATCC 11635 / DSM 40517 / JCM 4748 / NBRC 13426 / NCIMB 8594 / NRRL 2338)).